The sequence spans 386 residues: Phosphoglycerate kinase (386 aa).

Substrate-binding positions include 21–23 (DLN), arginine 36, 59–62 (HLGR), arginine 112, and arginine 145. ATP-binding positions include lysine 196, glutamate 313, and 339–342 (GGDT).

It belongs to the phosphoglycerate kinase family. As to quaternary structure, monomer.

Its subcellular location is the cytoplasm. It carries out the reaction (2R)-3-phosphoglycerate + ATP = (2R)-3-phospho-glyceroyl phosphate + ADP. It participates in carbohydrate degradation; glycolysis; pyruvate from D-glyceraldehyde 3-phosphate: step 2/5. The polypeptide is Phosphoglycerate kinase (Haemophilus influenzae (strain PittGG)).